The sequence spans 305 residues: UDP-3-O-acyl-N-acetylglucosamine deacetylase (305 aa).

Residues His78, His237, and Asp241 each coordinate Zn(2+). The active-site Proton donor is the His264.

It belongs to the LpxC family. Zn(2+) serves as cofactor.

The enzyme catalyses a UDP-3-O-[(3R)-3-hydroxyacyl]-N-acetyl-alpha-D-glucosamine + H2O = a UDP-3-O-[(3R)-3-hydroxyacyl]-alpha-D-glucosamine + acetate. It participates in glycolipid biosynthesis; lipid IV(A) biosynthesis; lipid IV(A) from (3R)-3-hydroxytetradecanoyl-[acyl-carrier-protein] and UDP-N-acetyl-alpha-D-glucosamine: step 2/6. Its function is as follows. Catalyzes the hydrolysis of UDP-3-O-myristoyl-N-acetylglucosamine to form UDP-3-O-myristoylglucosamine and acetate, the committed step in lipid A biosynthesis. The chain is UDP-3-O-acyl-N-acetylglucosamine deacetylase from Burkholderia ambifaria (strain ATCC BAA-244 / DSM 16087 / CCUG 44356 / LMG 19182 / AMMD) (Burkholderia cepacia (strain AMMD)).